The chain runs to 549 residues: Membrane protein insertase YidC (549 aa).

The helical transmembrane segment at 8 to 28 (VLLATVLSVAVLIVWQFVFPS) threads the bilayer. The span at 29 to 39 (PKPKPQPPKPP) shows a compositional bias: pro residues. Residues 29–68 (PKPKPQPPKPPEAAQRAEAPAAPAPGQPAAQAPAPAVPQD) form a disordered region. Composition is skewed to low complexity over residues 40–49 (EAAQRAEAPA) and 55–68 (QPAA…VPQD). Helical transmembrane passes span 328-348 (IDYG…LFVM), 354-374 (LVAN…VLLY), 424-444 (LGGC…YATL), and 502-522 (PGFF…YIFV).

It belongs to the OXA1/ALB3/YidC family. Type 1 subfamily. Interacts with the Sec translocase complex via SecD. Specifically interacts with transmembrane segments of nascent integral membrane proteins during membrane integration.

The protein resides in the cell inner membrane. Required for the insertion and/or proper folding and/or complex formation of integral membrane proteins into the membrane. Involved in integration of membrane proteins that insert both dependently and independently of the Sec translocase complex, as well as at least some lipoproteins. Aids folding of multispanning membrane proteins. The protein is Membrane protein insertase YidC of Anaeromyxobacter sp. (strain Fw109-5).